The chain runs to 87 residues: MASSSSLTRSGSVHLDEKWKLSKKDGGASRITRSSSTSSSSFNGKKQGRCAFTRKCARLVKEQRARFYIMRRCVIMLICWRDNYSDS.

Residues 1–11 (MASSSSLTRSG) show a composition bias toward polar residues. A disordered region spans residues 1–47 (MASSSSLTRSGSVHLDEKWKLSKKDGGASRITRSSSTSSSSFNGKKQ). Positions 14–27 (HLDEKWKLSKKDGG) are enriched in basic and acidic residues. Residues 29–41 (SRITRSSSTSSSS) are compositionally biased toward low complexity. Residues 51 to 82 (AFTRKCARLVKEQRARFYIMRRCVIMLICWRD) are required for DVL/RTFL small polypeptide activity. A helical membrane pass occupies residues 64 to 80 (RARFYIMRRCVIMLICW). Asn-83 carries an N-linked (GlcNAc...) asparagine glycan.

This sequence belongs to the DVL/RTFL small polypeptides family.

The protein localises to the cell membrane. In terms of biological role, small polypeptide acting as a regulatory molecule which coordinates cellular responses required for differentiation, growth and development, probably by restricting polar cell proliferation in lateral organs and coordinating socket cell recruitment and differentiation at trichome sites. This chain is Small polypeptide DEVIL 11, found in Arabidopsis thaliana (Mouse-ear cress).